The chain runs to 502 residues: ATP synthase subunit alpha (502 aa).

Positions 115-138 are disordered; the sequence is VDGLGPIETTETRPIESPAPGVMD. 169–176 is an ATP binding site; sequence GDRQTGKT.

It belongs to the ATPase alpha/beta chains family. In terms of assembly, F-type ATPases have 2 components, CF(1) - the catalytic core - and CF(0) - the membrane proton channel. CF(1) has five subunits: alpha(3), beta(3), gamma(1), delta(1), epsilon(1). CF(0) has three main subunits: a(1), b(2) and c(9-12). The alpha and beta chains form an alternating ring which encloses part of the gamma chain. CF(1) is attached to CF(0) by a central stalk formed by the gamma and epsilon chains, while a peripheral stalk is formed by the delta and b chains.

The protein resides in the cell membrane. It catalyses the reaction ATP + H2O + 4 H(+)(in) = ADP + phosphate + 5 H(+)(out). Functionally, produces ATP from ADP in the presence of a proton gradient across the membrane. The alpha chain is a regulatory subunit. The sequence is that of ATP synthase subunit alpha from Geobacillus sp. (strain WCH70).